A 577-amino-acid chain; its full sequence is Aspartate--tRNA ligase (577 aa).

E171 serves as a coordination point for L-aspartate. The aspartate stretch occupies residues 195 to 198 (QLFK). R217 contacts L-aspartate. ATP is bound by residues 217–219 (RDE) and Q226. H437 contacts L-aspartate. E472 contributes to the ATP binding site. R479 is a binding site for L-aspartate. 524 to 527 (GFDR) contributes to the ATP binding site.

Belongs to the class-II aminoacyl-tRNA synthetase family. Type 1 subfamily. In terms of assembly, homodimer.

It is found in the cytoplasm. The enzyme catalyses tRNA(Asp) + L-aspartate + ATP = L-aspartyl-tRNA(Asp) + AMP + diphosphate. Functionally, catalyzes the attachment of L-aspartate to tRNA(Asp) in a two-step reaction: L-aspartate is first activated by ATP to form Asp-AMP and then transferred to the acceptor end of tRNA(Asp). This is Aspartate--tRNA ligase from Deinococcus deserti (strain DSM 17065 / CIP 109153 / LMG 22923 / VCD115).